Consider the following 412-residue polypeptide: [Pyruvate dehydrogenase (acetyl-transferring)] kinase isozyme 4, mitochondrial (412 aa).

A Histidine kinase domain is found at 138–368; it reads ILEYKDTCTV…DAIIYLKALS (231 aa). ATP is bound by residues 254–261, Asp293, 312–313, and 329–334; these read ELFKNAMR, ST, and GFGYGL.

Belongs to the PDK/BCKDK protein kinase family. In terms of assembly, homodimer. Interacts with the pyruvate dehydrogenase complex subunit DLAT, and is part of the multimeric pyruvate dehydrogenase complex that contains multiple copies of pyruvate dehydrogenase (E1), dihydrolipoamide acetyltransferase (DLAT, E2) and lipoamide dehydrogenase (DLD, E3).

The protein localises to the mitochondrion matrix. It catalyses the reaction L-seryl-[pyruvate dehydrogenase E1 alpha subunit] + ATP = O-phospho-L-seryl-[pyruvate dehydrogenase E1 alpha subunit] + ADP + H(+). Its function is as follows. Kinase that plays a key role in regulation of glucose and fatty acid metabolism and homeostasis via phosphorylation of the pyruvate dehydrogenase subunits PDHA1 and PDHA2. This inhibits pyruvate dehydrogenase activity, and thereby regulates metabolite flux through the tricarboxylic acid cycle, down-regulates aerobic respiration and inhibits the formation of acetyl-coenzyme A from pyruvate. Inhibition of pyruvate dehydrogenase decreases glucose utilization and increases fat metabolism in response to prolonged fasting and starvation. Plays an important role in maintaining normal blood glucose levels under starvation, and is involved in the insulin signaling cascade. Via its regulation of pyruvate dehydrogenase activity, plays an important role in maintaining normal blood pH and in preventing the accumulation of ketone bodies under starvation. In the fed state, mediates cellular responses to glucose levels and to a high-fat diet. Regulates both fatty acid oxidation and de novo fatty acid biosynthesis. Plays a role in the generation of reactive oxygen species. Protects detached epithelial cells against anoikis. Plays a role in cell proliferation via its role in regulating carbohydrate and fatty acid metabolism. This chain is [Pyruvate dehydrogenase (acetyl-transferring)] kinase isozyme 4, mitochondrial (Pdk4), found in Mus musculus (Mouse).